A 62-amino-acid polypeptide reads, in one-letter code: Large ribosomal subunit protein bL28 (62 aa).

This sequence belongs to the bacterial ribosomal protein bL28 family.

This is Large ribosomal subunit protein bL28 from Caldanaerobacter subterraneus subsp. tengcongensis (strain DSM 15242 / JCM 11007 / NBRC 100824 / MB4) (Thermoanaerobacter tengcongensis).